Consider the following 448-residue polypeptide: Phosphoglucosamine mutase (448 aa).

Catalysis depends on S100, which acts as the Phosphoserine intermediate. Positions 100, 240, 242, and 244 each coordinate Mg(2+). Residue S100 is modified to Phosphoserine.

Belongs to the phosphohexose mutase family. Requires Mg(2+) as cofactor. In terms of processing, activated by phosphorylation.

It catalyses the reaction alpha-D-glucosamine 1-phosphate = D-glucosamine 6-phosphate. Its function is as follows. Catalyzes the conversion of glucosamine-6-phosphate to glucosamine-1-phosphate. The protein is Phosphoglucosamine mutase of Clostridium beijerinckii (strain ATCC 51743 / NCIMB 8052) (Clostridium acetobutylicum).